A 179-amino-acid polypeptide reads, in one-letter code: Large ribosomal subunit protein uL6 (179 aa).

This sequence belongs to the universal ribosomal protein uL6 family. Part of the 50S ribosomal subunit.

In terms of biological role, this protein binds to the 23S rRNA, and is important in its secondary structure. It is located near the subunit interface in the base of the L7/L12 stalk, and near the tRNA binding site of the peptidyltransferase center. The protein is Large ribosomal subunit protein uL6 of Nocardia farcinica (strain IFM 10152).